The chain runs to 198 residues: NAD(P)H dehydrogenase (quinone) (198 aa).

The Flavodoxin-like domain occupies 4-189; that stretch reads ILVLYYSMYG…SIARYQGEYV (186 aa). FMN is bound by residues 10 to 15 and 78 to 80; these read SMYGHI and TRF. Tyrosine 12 provides a ligand contact to NAD(+). Tryptophan 98 is a substrate binding site. FMN is bound by residues 113–118 and histidine 133; that span reads STGTGG.

Belongs to the WrbA family. FMN is required as a cofactor.

It carries out the reaction a quinone + NADH + H(+) = a quinol + NAD(+). The catalysed reaction is a quinone + NADPH + H(+) = a quinol + NADP(+). The polypeptide is NAD(P)H dehydrogenase (quinone) (Salmonella paratyphi C (strain RKS4594)).